Reading from the N-terminus, the 433-residue chain is MVHSFKYIIIGGGVSAGYAAREFVKQGVHPGELAIISKEAVAPYERPALSKAYLFPESPARLPGFHTCVGSGGERLLPEWYSEKGIQLYLSTEIVSADLAAKFLKSANGEHFDYQTLVIATGSAVIRLTDFGVIGANAKNIFYLREVDDADKLYEAIKRKKNAKRVVVGGGYIGLELSAVLKLNDLDVTMVYPEPWCMPRLFTSEIAAFYEGYYANKGINIIKGTVAVGFTANSDGEVKEVKLKDGRVLEADIVIVGVGGRPQISLFKGQVEEQHGGIKTDSFFKTSVPDVYAVGDVATFPLKLYNDVRRVEHVDHARKSAEQAAKAIFAADVGKSVEEYDYLPYFYSRSFDLSWQFYGDNVGETVLFGDNDPASSKPKFGTYWIKEGKVVGAFLEGGTPDENKAIAKVARAKPAVEDVNQLAEEGLSFASKI.

FAD-binding positions include 12–15 (GGVS), glutamate 39, arginine 46, lysine 51, isoleucine 94, and 145–146 (RE). Residues 170-176 (GGYIGLE), glutamate 194, arginine 200, and glycine 259 contribute to the NAD(+) site. 172-176 (YIGLE) serves as a coordination point for NADP(+). Arginine 200 and glycine 259 together coordinate NADP(+). An FAD-binding site is contributed by aspartate 296. 312-313 (EH) contributes to the NAD(+) binding site. 312–313 (EH) is an NADP(+) binding site. Valine 314 contacts FAD. Residue arginine 318 participates in L-ascorbate binding. Tyrosine 347 provides a ligand contact to FAD. Tyrosine 347 lines the NAD(+) pocket. Tyrosine 347 is an NADP(+) binding site. Residue arginine 349 coordinates L-ascorbate.

The protein belongs to the FAD-dependent oxidoreductase family. FAD serves as cofactor. Expressed at relatively low levels in all tissues examined.

Its subcellular location is the cytoplasm. It catalyses the reaction 2 monodehydro-L-ascorbate radical + NADH + H(+) = 2 L-ascorbate + NAD(+). Catalyzes the conversion of monodehydroascorbate to ascorbate, oxidizing NADH in the process. The sequence is that of Monodehydroascorbate reductase from Pisum sativum (Garden pea).